The following is a 503-amino-acid chain: Aspartyl/glutamyl-tRNA(Asn/Gln) amidotransferase subunit B (503 aa).

This sequence belongs to the GatB/GatE family. GatB subfamily. As to quaternary structure, heterotrimer of A, B and C subunits.

The catalysed reaction is L-glutamyl-tRNA(Gln) + L-glutamine + ATP + H2O = L-glutaminyl-tRNA(Gln) + L-glutamate + ADP + phosphate + H(+). It carries out the reaction L-aspartyl-tRNA(Asn) + L-glutamine + ATP + H2O = L-asparaginyl-tRNA(Asn) + L-glutamate + ADP + phosphate + 2 H(+). Allows the formation of correctly charged Asn-tRNA(Asn) or Gln-tRNA(Gln) through the transamidation of misacylated Asp-tRNA(Asn) or Glu-tRNA(Gln) in organisms which lack either or both of asparaginyl-tRNA or glutaminyl-tRNA synthetases. The reaction takes place in the presence of glutamine and ATP through an activated phospho-Asp-tRNA(Asn) or phospho-Glu-tRNA(Gln). This chain is Aspartyl/glutamyl-tRNA(Asn/Gln) amidotransferase subunit B, found in Rhodococcus jostii (strain RHA1).